A 700-amino-acid chain; its full sequence is Myb-related protein B (700 aa).

HTH myb-type domains are found at residues Arg-26–Leu-77, Asn-78–Val-133, and Lys-134–Val-184. The H-T-H motif DNA-binding region spans Trp-54–Leu-77. Lys-104 is covalently cross-linked (Glycyl lysine isopeptide (Lys-Gly) (interchain with G-Cter in SUMO2)). DNA-binding regions (H-T-H motif) lie at residues Trp-106–Leu-129 and Trp-157–Ile-180. Glycyl lysine isopeptide (Lys-Gly) (interchain with G-Cter in SUMO2) cross-links involve residues Lys-194 and Lys-197. Disordered stretches follow at residues Leu-212 to Ser-287 and Pro-391 to Arg-412. Residues Gln-213 to Pro-229 show a composition bias toward polar residues. Ser-241 bears the Phosphoserine mark. At Thr-266 the chain carries Phosphothreonine. Lys-275 is covalently cross-linked (Glycyl lysine isopeptide (Lys-Gly) (interchain with G-Cter in SUMO2)). 2 positions are modified to phosphoserine: Ser-282 and Ser-393. A Glycyl lysine isopeptide (Lys-Gly) (interchain with G-Cter in SUMO2) cross-link involves residue Lys-411. A Nuclear localization signal motif is present at residues Lys-411–Arg-417. 2 positions are modified to phosphothreonine; by CDK2: Thr-440 and Thr-444. Glycyl lysine isopeptide (Lys-Gly) (interchain with G-Cter in SUMO2) cross-links involve residues Lys-447 and Lys-482. Thr-487 and Thr-494 each carry phosphothreonine; by CDK2. Lys-499 participates in a covalent cross-link: Glycyl lysine isopeptide (Lys-Gly) (interchain with G-Cter in SUMO2). Thr-505 bears the Phosphothreonine mark. A Glycyl lysine isopeptide (Lys-Gly) (interchain with G-Cter in SUMO2) cross-link involves residue Lys-509. The residue at position 520 (Thr-520) is a Phosphothreonine; by CDK2. Residues Lys-523, Lys-533, and Lys-546 each participate in a glycyl lysine isopeptide (Lys-Gly) (interchain with G-Cter in SUMO2) cross-link. Residues Arg-564 to Lys-584 carry the Bipartite nuclear localization signal motif. Ser-577 bears the Phosphoserine; by CDK2 mark. Glycyl lysine isopeptide (Lys-Gly) (interchain with G-Cter in SUMO2) cross-links involve residues Lys-584, Lys-596, Lys-625, Lys-639, and Lys-648.

In terms of assembly, component of the DREAM complex (also named LINC complex) at least composed of E2F4, E2F5, LIN9, LIN37, LIN52, LIN54, MYBL1, MYBL2, RBL1, RBL2, RBBP4, TFDP1 and TFDP2. The complex exists in quiescent cells where it represses cell cycle-dependent genes. It dissociates in S phase when LIN9, LIN37, LIN52 and LIN54 form a subcomplex that binds to MYBL22. Interacts with CCNF (via the Cyclin N-terminal domain). In terms of processing, phosphorylated by cyclin A/CDK2 during S-phase. Phosphorylation at Thr-520 is probably involved in transcriptional activity.

The protein resides in the nucleus. In terms of biological role, transcription factor involved in the regulation of cell survival, proliferation, and differentiation. Transactivates the expression of the CLU gene. This Homo sapiens (Human) protein is Myb-related protein B (MYBL2).